Here is a 238-residue protein sequence, read N- to C-terminus: Phosphoribosylaminoimidazole-succinocarboxamide synthase (238 aa).

It belongs to the SAICAR synthetase family.

It catalyses the reaction 5-amino-1-(5-phospho-D-ribosyl)imidazole-4-carboxylate + L-aspartate + ATP = (2S)-2-[5-amino-1-(5-phospho-beta-D-ribosyl)imidazole-4-carboxamido]succinate + ADP + phosphate + 2 H(+). It participates in purine metabolism; IMP biosynthesis via de novo pathway; 5-amino-1-(5-phospho-D-ribosyl)imidazole-4-carboxamide from 5-amino-1-(5-phospho-D-ribosyl)imidazole-4-carboxylate: step 1/2. This is Phosphoribosylaminoimidazole-succinocarboxamide synthase (purC) from Pyrococcus horikoshii (strain ATCC 700860 / DSM 12428 / JCM 9974 / NBRC 100139 / OT-3).